A 696-amino-acid chain; its full sequence is Potassium voltage-gated channel subfamily KQT member 4 (696 aa).

Residues 1-20 are disordered; the sequence is MAEAPPRRLGLGPPPGDAPR. Topologically, residues 1 to 97 are cytoplasmic; sequence MAEAPPRRLG…VYNVLERPRG (97 aa). Residue R94 coordinates a 1,2-diacyl-sn-glycero-3-phospho-(1D-myo-inositol-4,5-bisphosphate). Residues 98 to 119 form a helical membrane-spanning segment; that stretch reads WAFVYHVFIFLLVFSCLVLSVL. Over 120 to 130 the chain is Extracellular; the sequence is STIQEHQELAN. The chain crosses the membrane as a helical span at residues 131–153; it reads ECLLILEFVMIVVFGLEYIIRVW. At 154–169 the chain is on the cytoplasmic side; it reads SAGCCCRYRGWQGRFR. A helical membrane pass occupies residues 170 to 192; sequence FARKPFCVIDFIVFVASVAVIAA. K173 contacts a 1,2-diacyl-sn-glycero-3-phospho-(1D-myo-inositol-4,5-bisphosphate). The Extracellular portion of the chain corresponds to 193–203; the sequence is GTQGNIFATSA. The helical; Voltage-sensor transmembrane segment at 204-224 threads the bilayer; sequence LRSMRFLQILRMVRMDRRGGT. Residues R220, R221, K226, and S236 each contribute to the a 1,2-diacyl-sn-glycero-3-phospho-(1D-myo-inositol-4,5-bisphosphate) site. Residues 225–236 lie on the Cytoplasmic side of the membrane; it reads WKLLGSVVYAHS. The chain crosses the membrane as a helical span at residues 237 to 259; the sequence is KELITAWYIGFLVLIFASFLVYL. Residues 260-271 lie on the Extracellular side of the membrane; sequence AEKDANSDFSSY. The pore-forming intramembrane region spans 272–293; sequence ADSLWWGTITLTTIGYGDKTPH. T294 is a topological domain (extracellular). The helical transmembrane segment at 295–323 threads the bilayer; it reads WLGRVLAAGFALLGISFFALPAGILGSGF. Residues 324 to 696 lie on the Cytoplasmic side of the membrane; it reads ALKVQEQHRQ…ISRSVSTNMD (373 aa). A 1,2-diacyl-sn-glycero-3-phospho-(1D-myo-inositol-4,5-bisphosphate)-binding residues include H331 and K334. An interaction with CALM region spans residues 343–352; that stretch reads AANLIQAAWR. A disordered region spans residues 445–484; sequence SSQKRTGPSKQHLAPPPIPTSPSSEQVGEASSPSKVQKSW. The span at 465–484 shows a compositional bias: polar residues; that stretch reads SPSSEQVGEASSPSKVQKSW. Residues 536-550 are interaction with CALM; it reads RSVRILKFLVAKRKF. The segment at 547-651 is C-terminal assembly domain (tetramerization); that stretch reads KRKFKETLRP…SRCLRSGTSA (105 aa). Residues 589–609 are disordered; that stretch reads GRGPGDRKTREKGDKGPSDTE. Over residues 592-606 the composition is skewed to basic and acidic residues; that stretch reads PGDRKTREKGDKGPS. Residues 610–645 adopt a coiled-coil conformation; that stretch reads AVDEISMMGRVVKVEKQVQSIEHKLDLLLGFYSRCL.

It belongs to the potassium channel family. KQT (TC 1.A.1.15) subfamily. Kv7.4/KCNQ4 sub-subfamily. As to quaternary structure, homotetramer. Interacts (via C-terminus) with calmodulin; forms a heterooctameric structure (with 4:4 KCNQ1:CALM stoichiometry); the interaction is calcium-independent, constitutive, participates in the proper assembly of a functional channel. The interaction with calcium-free CALM controls channel trafficking whereas interaction with calcium-bound CALM regulates channel gating. May form a functional heteromultimeric channel with KCNQ3. Interacts with HSP90AB1; promotes cell surface expression of KCNQ4. As to expression, in the inner ear expressed in the outer sensory hair cells of the cochlea and in type I hair cells of the vestibular organs. Also expressed in the postsynaptic membrane of the calyx nerve endings innervating type I cells. In the brain expressed in neurons of many, but not all, nuclei of the central auditory pathway. Absent from most other brain regions.

It localises to the basal cell membrane. The enzyme catalyses K(+)(in) = K(+)(out). Two molecules of phosphatidylinositol-4,5-bisphosphate (PIP2-I and PIP2-II) are essential to activate KCNQ4 channel by inducing the coupling of the voltage-sensing domain (VSD) and the pore-forming domain (PD). Upon channel activation, PIP2-I and PIP2-II disrupt the VSD-calmodulin/CALM interaction, causing the release of CALM from the VSD which triggers the opening of the gate. Calcium suppresses KCNQ4 channel current through calcium-bound CALM C-terminus. Therefore CALM acts as calcium sensor that controls channel activity. Functionally, pore-forming subunit of the voltage-gated potassium (Kv) channel involved in the regulation of sensory cells excitability in the cochlea. KCNQ4/Kv7.4 channel is composed of 4 pore-forming subunits assembled as tetramers. Promotes the outflow of potassium ions in the repolarization phase of action potential which plays a role in regulating membrane potential of excitable cells. The channel conducts a slowly activating and deactivating current. Current often shows some inward rectification at positive potentials. Channel may be selectively permeable in vitro to other cations besides potassium, in decreasing order of affinity K(+) = Rb(+) &gt; Cs(+) &gt; Na(+). Important for normal physiological function of inner ear such as sensory perception of sound. The sequence is that of Potassium voltage-gated channel subfamily KQT member 4 from Mus musculus (Mouse).